Reading from the N-terminus, the 116-residue chain is uncharacterized protein (116 aa).

A helical membrane pass occupies residues 20–42 (YLNKYYSVITYFLAFLTKFAILL). The segment at 95 to 116 (IEFQSKSSPVPPASESNKGINE) is disordered.

The protein localises to the membrane. This is an uncharacterized protein from Saccharomyces cerevisiae (strain ATCC 204508 / S288c) (Baker's yeast).